Here is a 404-residue protein sequence, read N- to C-terminus: uncharacterized protein (404 aa).

Helical transmembrane passes span 37-57, 92-112, 122-142, 188-208, 230-250, and 272-292; these read LLIL…FVQF, IYNV…FVLG, LLTL…SYIP, MFYA…ILII, IGGI…TIGT, and AFFL…LGIF.

Its subcellular location is the cell membrane. This is an uncharacterized protein from Mycoplasma pneumoniae (strain ATCC 29342 / M129 / Subtype 1) (Mycoplasmoides pneumoniae).